We begin with the raw amino-acid sequence, 121 residues long: Small ribosomal subunit protein uS13 (121 aa).

Positions valine 97–lysine 121 are disordered. Residues glutamine 100–lysine 121 show a composition bias toward basic residues.

It belongs to the universal ribosomal protein uS13 family. Part of the 30S ribosomal subunit. Forms a loose heterodimer with protein S19. Forms two bridges to the 50S subunit in the 70S ribosome.

Located at the top of the head of the 30S subunit, it contacts several helices of the 16S rRNA. In the 70S ribosome it contacts the 23S rRNA (bridge B1a) and protein L5 of the 50S subunit (bridge B1b), connecting the 2 subunits; these bridges are implicated in subunit movement. Contacts the tRNAs in the A and P-sites. The chain is Small ribosomal subunit protein uS13 from Prochlorococcus marinus (strain NATL1A).